A 483-amino-acid chain; its full sequence is Cyclic AMP-dependent transcription factor ATF-7 (483 aa).

The segment at 1-285 is transactivation domain; it reads MGDDRPFVCN…GMVVGSASTM (285 aa). The C2H2-type zinc finger occupies 7–31; that stretch reads FVCNAPGCGQRFTNEDHLAVHKHKH. T51 carries the post-translational modification Phosphothreonine; by MAPK11. Phosphothreonine occurs at positions 53 and 101. Residue K107 forms a Glycyl lysine isopeptide (Lys-Gly) (interchain with G-Cter in SUMO1) linkage. Disordered regions lie at residues 110 to 148 and 299 to 345; these read EPVEVDSSPPDSPASSPCSPPLKEKEVTPKPVLISTPTP and HPDA…NRAA. Low complexity-rich tracts occupy residues 114–126 and 307–320; these read VDSSPPDSPASSP and QPQVSPAQPTPSTG. Residues 326–343 are compositionally biased toward basic and acidic residues; the sequence is TVDEDPDERRQRFLERNR. One can recognise a bZIP domain in the interval 332-395; it reads DERRQRFLER…AQLKQLLLAH (64 aa). Residues 334-354 form a basic motif region; the sequence is RRQRFLERNRAAASRCRQKRK. The segment at 360–388 is leucine-zipper; sequence LEKKAEELTSQNIQLSNEVTLLRNEVAQL. 2 disordered regions span residues 407 to 440 and 464 to 483; these read TQGYLESPKESSEPTGSPAPVIQHSSATAPSNGL and LSMPIQSHVIMTPQSQSAGR. A phosphoserine mark is found at S413 and S423. Over residues 429–440 the composition is skewed to polar residues; that stretch reads QHSSATAPSNGL.

It belongs to the bZIP family. In terms of assembly, homodimer; binds DNA as homodimer. Heterodimer; heterodimerizes with other members of ATF family and with JUN family members. Interacts with JNK2; the interaction does not phosphorylate ATF7 but acts as a docking site for other ATF-associated partners such as JUN family members. Interacts (via its transactivation domain) with TAF12 (isoforms TAFII15 and TAFII20); the interaction potentiates the transactivation activity (isoform TAFII20 only) and is inhibited by ATF7 sumoylation. Interacts with TAF4; the interaction inhibits the TAF12-dependent transactivation. Interacts with MAPK9; the interaction does not phosphorylate ATF7 but acts as a docking site for ATF7-associated partners such as JUN. Interacts with Ku complex components XRCC6 and XRCC7. Interacts with TERT. In terms of processing, on EGF stimulation, phosphorylated first on Thr-53 allowing subsequent phosphorylation on Thr-51. This latter phosphorylation prevents sumoylation, increases binding to TAF12 and enhances transcriptional activity. Social isolation stress as well as TNF-alpha also induce the phosphorylation of ATF7. Phosphorylated in proliferating colonic and small intestinal epithelial cells. Sumoylation delays nuclear localization and inhibits transactivation activity through preventing binding to TAF12. RANBP2 appears to be the specific E3 ligase.

It is found in the nucleus. The protein resides in the nucleoplasm. The protein localises to the chromosome. It localises to the telomere. In terms of biological role, stress-responsive chromatin regulator that plays a role in various biological processes including innate immunological memory, adipocyte differentiation or telomerase regulation. In absence of stress, contributes to the formation of heterochromatin and heterochromatin-like structure by recruiting histone H3K9 tri- and di-methyltransferases thus silencing the transcription of target genes such as STAT1 in adipocytes, or genes involved in innate immunity in macrophages and adipocytes. Stress induces ATF7 phosphorylation that disrupts interactions with histone methyltransferase and enhances the association with coactivators containing histone acetyltransferase and/or histone demethylase, leading to disruption of the heterochromatin-like structure and subsequently transcriptional activation. In response to TNF-alpha, which is induced by various stresses, phosphorylated ATF7 and telomerase are released from telomeres leading to telomere shortening. Plays also a role in maintaining epithelial regenerative capacity and protecting against cell death during intestinal epithelial damage and repair. The polypeptide is Cyclic AMP-dependent transcription factor ATF-7 (ATF7) (Pongo abelii (Sumatran orangutan)).